The sequence spans 184 residues: Large ribosomal subunit protein uL15 (184 aa).

Positions 1–62 (MDLSSLRPAK…QMPMYRRLPK (62 aa)) are disordered. Over residues 21-35 (RGPGSGNGTTAGKGN) the composition is skewed to gly residues.

This sequence belongs to the universal ribosomal protein uL15 family. In terms of assembly, part of the 50S ribosomal subunit.

In terms of biological role, binds to the 23S rRNA. The protein is Large ribosomal subunit protein uL15 of Chlorobaculum parvum (strain DSM 263 / NCIMB 8327) (Chlorobium vibrioforme subsp. thiosulfatophilum).